The sequence spans 361 residues: Septin-2 (361 aa).

A Phosphotyrosine modification is found at Tyr-17. One can recognise a Septin-type G domain in the interval 34 to 306 (KGFEFTLMVV…ENFRSERLKR (273 aa)). The G1 motif stretch occupies residues 44–51 (GESGLGKS). GTP-binding positions include 44-51 (GESGLGKS), Thr-78, Gly-104, and 183-191 (KADTLTLKE). The interval 101–104 (DTPG) is G3 motif. The interval 182-185 (AKAD) is G4 motif. At Lys-190 the chain carries N6-acetyllysine. Tyr-211 is modified (phosphotyrosine). Residue Ser-218 is modified to Phosphoserine. Gly-241 and Arg-256 together coordinate GTP. Residues 260-270 (WGVVEVENPEH) are important for dimerization.

This sequence belongs to the TRAFAC class TrmE-Era-EngA-EngB-Septin-like GTPase superfamily. Septin GTPase family. In terms of assembly, septins polymerize into heterooligomeric protein complexes that form filaments, and associate with cellular membranes, actin filaments and microtubules. GTPase activity is required for filament formation. Septin filaments are assembled from asymmetrical heterotrimers, composed of SEPTIN2, SEPTIN6 and SEPTIN7 that associate head-to-head to form a hexameric unit. Interaction between SEPTIN2 and SEPTIN7 seems indirect. Also interacts with SEPTIN9 and SEPTIN5. Interaction with SEPTIN4 not detected. Component of a septin core octameric complex consisting of SEPTIN12, SEPTIN7, SEPTIN6 and SEPTIN2 or SEPTIN4 in the order 12-7-6-2-2-6-7-12 or 12-7-6-4-4-6-7-12 and located in the sperm annulus. Interacts with MAP4. Interacts with DZIP1L.

The protein resides in the cytoplasm. It is found in the cytoskeleton. The protein localises to the spindle. It localises to the cleavage furrow. Its subcellular location is the midbody. The protein resides in the cell cortex. It is found in the cell projection. The protein localises to the cilium membrane. It localises to the cilium. Its subcellular location is the flagellum. Functionally, filament-forming cytoskeletal GTPase. Forms a filamentous structure with SEPTIN12, SEPTIN6, SEPTIN2 and probably SEPTIN4 at the sperm annulus which is required for the structural integrity and motility of the sperm tail during postmeiotic differentiation. Required for normal organization of the actin cytoskeleton. Plays a role in the biogenesis of polarized columnar-shaped epithelium by maintaining polyglutamylated microtubules, thus facilitating efficient vesicle transport, and by impeding MAP4 binding to tubulin. Required for the progression through mitosis. Forms a scaffold at the midplane of the mitotic splindle required to maintain CENPE localization at kinetochores and consequently chromosome congression. During anaphase, may be required for chromosome segregation and spindle elongation. Plays a role in ciliogenesis and collective cell movements. In cilia, required for the integrity of the diffusion barrier at the base of the primary cilium that prevents diffusion of transmembrane proteins between the cilia and plasma membranes: probably acts by regulating the assembly of the tectonic-like complex (also named B9 complex) by localizing TMEM231 protein. The protein is Septin-2 of Rattus norvegicus (Rat).